The sequence spans 294 residues: Formamidopyrimidine-DNA glycosylase (294 aa).

The active-site Schiff-base intermediate with DNA is the Pro2. Residue Glu3 is the Proton donor of the active site. The active-site Proton donor; for beta-elimination activity is Lys61. 3 residues coordinate DNA: His104, Arg123, and Lys169. The FPG-type zinc-finger motif lies at Ala255 to Pro289. The active-site Proton donor; for delta-elimination activity is the Arg279.

Belongs to the FPG family. Monomer. Requires Zn(2+) as cofactor.

It carries out the reaction Hydrolysis of DNA containing ring-opened 7-methylguanine residues, releasing 2,6-diamino-4-hydroxy-5-(N-methyl)formamidopyrimidine.. The catalysed reaction is 2'-deoxyribonucleotide-(2'-deoxyribose 5'-phosphate)-2'-deoxyribonucleotide-DNA = a 3'-end 2'-deoxyribonucleotide-(2,3-dehydro-2,3-deoxyribose 5'-phosphate)-DNA + a 5'-end 5'-phospho-2'-deoxyribonucleoside-DNA + H(+). Its function is as follows. Involved in base excision repair of DNA damaged by oxidation or by mutagenic agents. Acts as a DNA glycosylase that recognizes and removes damaged bases. Has a preference for oxidized purines, such as 7,8-dihydro-8-oxoguanine (8-oxoG). Has AP (apurinic/apyrimidinic) lyase activity and introduces nicks in the DNA strand. Cleaves the DNA backbone by beta-delta elimination to generate a single-strand break at the site of the removed base with both 3'- and 5'-phosphates. This is Formamidopyrimidine-DNA glycosylase from Nocardia farcinica (strain IFM 10152).